The sequence spans 309 residues: MVKVYAPASIGNVSVGFDVLGAAVSPIDGTLLGDCVSVEAAETFSLQNAGRFVSKLPAEPKENIVYQCWERFCQEIGREVPVAMRLEKNMPIGSGLGSSACSVVAGLMAMNEFCDRPLDKTTLLGLMGELEGRISGSVHYDNVAPCYLGGLQLMLEEEGIISQEVPCFDDWLWVMAYPGIKVSTAEARAILPAQYRRQDCISHGRYLAGFIHACHTRQPQLAAKLMQDVIAEPYRTRLLPGFAEARKAAQEIGALACGISGSGPTLFAVCNDGATAQRMAAWLQQHYLQNDEGFVHICRLDTAGARLLG.

Residue Pro91–Cys101 coordinates ATP.

It belongs to the GHMP kinase family. Homoserine kinase subfamily.

It localises to the cytoplasm. The enzyme catalyses L-homoserine + ATP = O-phospho-L-homoserine + ADP + H(+). The protein operates within amino-acid biosynthesis; L-threonine biosynthesis; L-threonine from L-aspartate: step 4/5. Catalyzes the ATP-dependent phosphorylation of L-homoserine to L-homoserine phosphate. This is Homoserine kinase (thrB) from Serratia marcescens.